Reading from the N-terminus, the 449-residue chain is Tryptophan--tRNA ligase (449 aa).

Residues 10 to 12 (TTT) and 18 to 19 (GN) each bind ATP. The 'HIGH' region motif lies at 11 to 19 (TTGTPHLGN). D143 contributes to the L-tryptophan binding site. ATP contacts are provided by residues 155-157 (GRD), L197, and 204-208 (KMSKS). Residues 204 to 208 (KMSKS) carry the 'KMSKS' region motif.

This sequence belongs to the class-I aminoacyl-tRNA synthetase family. As to quaternary structure, homodimer.

The protein localises to the cytoplasm. It carries out the reaction tRNA(Trp) + L-tryptophan + ATP = L-tryptophyl-tRNA(Trp) + AMP + diphosphate + H(+). Functionally, catalyzes the attachment of tryptophan to tRNA(Trp). The sequence is that of Tryptophan--tRNA ligase from Pseudomonas syringae pv. tomato (strain ATCC BAA-871 / DC3000).